We begin with the raw amino-acid sequence, 173 residues long: dCTP deaminase, dUMP-forming (173 aa).

Residues 93–98 (RSSTGR), Asp-111, 119–121 (TLE), Gln-138, and Tyr-151 each bind dCTP. Catalysis depends on Glu-121, which acts as the Proton donor/acceptor.

It belongs to the dCTP deaminase family. In terms of assembly, homotrimer.

It catalyses the reaction dCTP + 2 H2O = dUMP + NH4(+) + diphosphate. It functions in the pathway pyrimidine metabolism; dUMP biosynthesis; dUMP from dCTP: step 1/1. Its function is as follows. Bifunctional enzyme that catalyzes both the deamination of dCTP to dUTP and the hydrolysis of dUTP to dUMP without releasing the toxic dUTP intermediate. This chain is dCTP deaminase, dUMP-forming, found in Clostridium botulinum (strain Eklund 17B / Type B).